The primary structure comprises 268 residues: Tryptophan synthase alpha chain (268 aa).

Active-site proton acceptor residues include glutamate 49 and aspartate 60.

The protein belongs to the TrpA family. As to quaternary structure, tetramer of two alpha and two beta chains.

The catalysed reaction is (1S,2R)-1-C-(indol-3-yl)glycerol 3-phosphate + L-serine = D-glyceraldehyde 3-phosphate + L-tryptophan + H2O. Its pathway is amino-acid biosynthesis; L-tryptophan biosynthesis; L-tryptophan from chorismate: step 5/5. Functionally, the alpha subunit is responsible for the aldol cleavage of indoleglycerol phosphate to indole and glyceraldehyde 3-phosphate. The chain is Tryptophan synthase alpha chain from Xanthomonas oryzae pv. oryzae (strain MAFF 311018).